A 424-amino-acid chain; its full sequence is Zygote arrest protein 1 (424 aa).

2 disordered regions span residues 125–175 and 196–313; these read RTLQ…PMRF and GPGP…SPEL. The span at 141–150 shows a compositional bias: gly residues; that stretch reads GAEGTTGGGS. Basic and acidic residues predominate over residues 289-298; the sequence is RARDGGDGRE. The segment at 326-409 adopts a 3CxxC-type zinc-finger fold; sequence KYGYYHCKDC…RQDLCGRCKG (84 aa).

It belongs to the ZAR1 family. Interacts with YBX2. Post-translationally, ubiquitinated and degradaded by the proteasome during oocyte meiotic maturation, leading to MARDO (mitochondria-associated ribonucleoprotein domain) membraneless compartment dissolution. As to expression, ovary and testis.

It localises to the cytoplasm. The protein resides in the cytoplasmic ribonucleoprotein granule. MRNA-binding protein that mediates formation of MARDO (mitochondria-associated ribonucleoprotein domain), a membraneless compartment that stores maternal mRNAs in oocytes. MARDO assembly around mitochondria is directed by an increase in mitochondrial membrane potential during oocyte growth. Promotes formation of MARDO phase-separated membraneless compartment by undergoing liquid-liquid phase separation upon binding to maternal mRNAs. Binds to the 3'-UTR of maternal mRNAs. Maternal mRNAs stored in the MARDO are translationally repressed. Essential for female fertility and oocyte-to-embryo transition by coordinating maternal mRNA storage, translation and degradation. The chain is Zygote arrest protein 1 from Homo sapiens (Human).